Consider the following 408-residue polypeptide: LL-diaminopimelate aminotransferase (408 aa).

Tyrosine 15 and glycine 42 together coordinate substrate. Pyridoxal 5'-phosphate is bound by residues tyrosine 72, 108 to 109 (SK), tyrosine 132, asparagine 187, tyrosine 218, and 246 to 248 (SFS). 3 residues coordinate substrate: lysine 109, tyrosine 132, and asparagine 187. Lysine 249 is modified (N6-(pyridoxal phosphate)lysine). The pyridoxal 5'-phosphate site is built by arginine 257 and asparagine 292. Substrate is bound by residues asparagine 292 and arginine 388.

This sequence belongs to the class-I pyridoxal-phosphate-dependent aminotransferase family. LL-diaminopimelate aminotransferase subfamily. As to quaternary structure, homodimer. It depends on pyridoxal 5'-phosphate as a cofactor.

The enzyme catalyses (2S,6S)-2,6-diaminopimelate + 2-oxoglutarate = (S)-2,3,4,5-tetrahydrodipicolinate + L-glutamate + H2O + H(+). It functions in the pathway amino-acid biosynthesis; L-lysine biosynthesis via DAP pathway; LL-2,6-diaminopimelate from (S)-tetrahydrodipicolinate (aminotransferase route): step 1/1. In terms of biological role, involved in the synthesis of meso-diaminopimelate (m-DAP or DL-DAP), required for both lysine and peptidoglycan biosynthesis. Catalyzes the direct conversion of tetrahydrodipicolinate to LL-diaminopimelate. This is LL-diaminopimelate aminotransferase from Synechococcus sp. (strain CC9311).